Here is a 270-residue protein sequence, read N- to C-terminus: DNA repair protein RecO (270 aa).

It belongs to the RecO family.

Involved in DNA repair and RecF pathway recombination. The protein is DNA repair protein RecO of Synechococcus sp. (strain WH7803).